Consider the following 566-residue polypeptide: Probable cytochrome P450 519D1 (566 aa).

The helical transmembrane segment at 1-21 (MNVFVLTFFICIIYLLFDLIK) threads the bilayer. The tract at residues 471–491 (FNNNNNNNNNNNNNNSNNKHK) is disordered. Residues 472–487 (NNNNNNNNNNNNNNSN) are compositionally biased toward low complexity. Heme is bound at residue Cys-510.

Belongs to the cytochrome P450 family. It depends on heme as a cofactor.

The protein localises to the membrane. This Dictyostelium discoideum (Social amoeba) protein is Probable cytochrome P450 519D1 (cyp519D1).